A 141-amino-acid polypeptide reads, in one-letter code: HTH-type transcriptional repressor NsrR (141 aa).

The HTH rrf2-type domain occupies 2 to 129 (QLTSFTDYGL…DNYTLADMVK (128 aa)). Residues 28 to 51 (ISQVTEVYGVSRNHMVKIINQLSR) constitute a DNA-binding region (H-T-H motif). [2Fe-2S] cluster contacts are provided by Cys-91, Cys-96, and Cys-102.

The cofactor is [2Fe-2S] cluster.

Its function is as follows. Nitric oxide-sensitive repressor of genes involved in protecting the cell against nitrosative stress. May require iron for activity. The polypeptide is HTH-type transcriptional repressor NsrR (Yersinia pseudotuberculosis serotype O:1b (strain IP 31758)).